The sequence spans 554 residues: Flavin-dependent halogenase ascD (554 aa).

FAD is bound by residues Gly15, Gly18, and Glu48. Positions 331 and 332 each coordinate chloride. An FAD-binding site is contributed by Val333.

Belongs to the flavin-dependent halogenase family.

It carries out the reaction ilicicolin B + FADH2 + chloride + O2 = ilicicolin A + FAD + 2 H2O + H(+). It participates in secondary metabolite biosynthesis; terpenoid biosynthesis. Its function is as follows. Flavin-dependent halogenase; part of the asc-1 gene cluster that mediates the biosynthesis of both ascochlorin and ascofuranone, a strong inhibitor of cyanide-insensitive alternative oxidases and a promising drug candidate against African trypanosomiasis. The first step in the pathway is performed by the non-reducing polyketide synthase ascC that produces orsellinic acid by condensing acetyl-CoA with 3 malonyl-CoA units. Orsellinic acid is then prenylated by the prenyltransferase ascA to yield ilicicolinic acid B. Ilicicolinic acid B is further reduced to ilicicolin B by the reductase ascB. The halogenase ascD then chlorinates ilicicolin B to produce ilicicolin A which is converted to ilicicolin A epoxide by the cytochrome P450 monooxygenase ascE that catalyzes stereoselective epoxidation of the terminal double bond of the prenyl group. Ilicicolin A epoxide is the last common precursor for the biosynthesis of ascofuranone and ascochlorin. The terpene cyclase ascF produces a monocyclic terpene, and the cyclization reaction is proposed to be initiated by protonation of the terminal epoxide of ilicicolin A epoxide to generate a monocyclic tertiarycation, which is followed by a series of hydride and methyl shifts with abstraction of proton, leading to the formation of the (14S,15R,19R)-trimethylcyclohexanone ring structure of ilicicolin C, which is finally reduced to ascochlorin by the dehydrogenase ascG. On the other hand, ilicicolin A epoxide is hydroxylated by the cytochrome P450 monooxygenase ascH, and the resultant product is cyclized by the terpene cyclase ascI to ascofuranol via protonation-initiated epoxide ring opening, which facilitates the 6-endo-tet cyclization to form the tetrahy-drofuran ring. Finally, ascofuranol is oxidized into ascofuranone by ascJ. This chain is Flavin-dependent halogenase ascD, found in Acremonium egyptiacum (Oospora egyptiaca).